We begin with the raw amino-acid sequence, 327 residues long: Cytochrome f (327 aa).

Positions 1-24 are cleaved as a signal peptide; it reads MKRIYLALCALLLLLGTGSRPAAA. The heme site is built by Tyr-25, Cys-45, Cys-48, and His-49. The chain crosses the membrane as a helical span at residues 293 to 313; that stretch reads VKWLVAFLAAVAITQLLLVLK.

The protein belongs to the cytochrome f family. As to quaternary structure, the 4 large subunits of the cytochrome b6-f complex are cytochrome b6, subunit IV (17 kDa polypeptide, PetD), cytochrome f and the Rieske protein, while the 4 small subunits are PetG, PetL, PetM and PetN. The complex functions as a dimer. The cofactor is heme.

The protein localises to the cellular thylakoid membrane. Its function is as follows. Component of the cytochrome b6-f complex, which mediates electron transfer between photosystem II (PSII) and photosystem I (PSI), cyclic electron flow around PSI, and state transitions. The chain is Cytochrome f from Synechococcus sp. (strain JA-3-3Ab) (Cyanobacteria bacterium Yellowstone A-Prime).